A 1127-amino-acid polypeptide reads, in one-letter code: Inactive phospholipase C-like protein 2 (1127 aa).

A compositionally biased stretch (gly residues) spans 1-11 (MAECGRGGAAG). The disordered stretch occupies residues 1–128 (MAECGRGGAA…KKTVSFSSMP (128 aa)). Position 2 is an N-acetylalanine (Ala2). Ser17 bears the Phosphoserine mark. Residues 19-31 (GPALGAKGALKAG) are compositionally biased toward low complexity. The segment covering 32–42 (VGEGGGGGGRL) has biased composition (gly residues). Residue Thr84 is modified to Phosphothreonine. Residues 141-251 (NSMVEGSELK…WVTGLRYLIS (111 aa)) enclose the PH domain. One can recognise a PI-PLC X-box domain in the interval 426-570 (QDMKQPLSHY…LKGKILIKAK (145 aa)). Thr584 bears the Phosphothreonine mark. Residues 618-734 (LSELVSICKS…GYVLRPAIMR (117 aa)) enclose the PI-PLC Y-box domain. A C2 domain is found at 734–863 (REEVSFFSAN…TGYRHVPLQS (130 aa)). A disordered region spans residues 1101 to 1127 (GTENADVQKPRRSLEVIPEKANDETGE). The span at 1106 to 1127 (DVQKPRRSLEVIPEKANDETGE) shows a compositional bias: basic and acidic residues. Phosphoserine is present on Ser1113.

Its subcellular location is the cytoplasm. Functionally, may play an role in the regulation of Ins(1,4,5)P3 around the endoplasmic reticulum. The sequence is that of Inactive phospholipase C-like protein 2 (PLCL2) from Homo sapiens (Human).